A 382-amino-acid chain; its full sequence is Protein MSN1 (382 aa).

A leucine-zipper region spans residues 12–26 (LNENEAILTNRVAEL). 2 stretches are compositionally biased toward polar residues: residues 104–114 (TLDPQGFTDGT) and 122–138 (NYTSVPMNNDQTAHPQN). Disordered regions lie at residues 104–138 (TLDPQGFTDGTTAPGAPRNYTSVPMNNDQTAHPQN) and 155–260 (NSQE…EEEQ). The span at 162–180 (SQQQTNSSNSISQENNSTN) shows a compositional bias: low complexity. 2 stretches are compositionally biased toward polar residues: residues 181-198 (PSVDTRFNKPQNYNSNLV) and 207-221 (NPPNNDGGQSQGLYI). Residues 222–231 (SSNSSQSRQS) show a composition bias toward low complexity. Positions 232-253 (PNLQKVSPNHENAVESNAQESV) are enriched in polar residues. Residues 266–271 (GLKRKR) carry the Nuclear localization signal motif.

The protein resides in the nucleus. Its function is as follows. May function as a transcriptional activator. Increased dosage of MSN1 restores invertase expression in yeast mutants defective in the SNF1 protein kinase, and msn1 disruption reduced derepression of invertase in the wild-type. May affect SUC2 expression. Expression of MSN1 enhances growth in iron-limiting conditions. In Saccharomyces cerevisiae (strain ATCC 204508 / S288c) (Baker's yeast), this protein is Protein MSN1 (MSN1).